Consider the following 206-residue polypeptide: Large ribosomal subunit protein uL4 (206 aa).

Residues 43-78 (ARSGNRKQKDREEVKHTTKKPWRQKGTGRARAGMSS) are disordered. The segment covering 49-58 (KQKDREEVKH) has biased composition (basic and acidic residues). Residues 59-70 (TTKKPWRQKGTG) show a composition bias toward basic residues.

This sequence belongs to the universal ribosomal protein uL4 family. Part of the 50S ribosomal subunit.

One of the primary rRNA binding proteins, this protein initially binds near the 5'-end of the 23S rRNA. It is important during the early stages of 50S assembly. It makes multiple contacts with different domains of the 23S rRNA in the assembled 50S subunit and ribosome. Its function is as follows. Forms part of the polypeptide exit tunnel. In Cupriavidus pinatubonensis (strain JMP 134 / LMG 1197) (Cupriavidus necator (strain JMP 134)), this protein is Large ribosomal subunit protein uL4.